Consider the following 344-residue polypeptide: AP2/ERF and B3 domain-containing transcription factor RAV1 (344 aa).

Positions 1–15 (MESSSVDESTTSTGS) are enriched in low complexity. A disordered region spans residues 1-22 (MESSSVDESTTSTGSICETPAI). A DNA-binding region (AP2/ERF) is located at residues 61–116 (KYKGVVPQPNGRWGAQIYEKHQRVWLGTFNEEDEAARAYDVAVHRFRRRDAVTNFK). The interval 148–169 (ELEQSKRRRNGNGNMTRTLLTS) is disordered. A DNA-binding region (TF-B3) is located at residues 188–292 (FEKAVTPSDV…QLYIGWKSRS (105 aa)).

It belongs to the AP2/ERF transcription factor family. RAV subfamily. As to quaternary structure, monomer. As to expression, expressed in all tissues examined: Roots, rosette leaves, cauline leaves, inflorescence stems, flowers and siliques. Highest expression in roots and rosette leaves. Very low expression in flowers.

It is found in the nucleus. Functionally, binds specifically to bipartite recognition sequences composed of two unrelated motifs, 5'-CAACA-3' and 5'-CACCTG-3'. May function as negative regulator of plant growth and development. The protein is AP2/ERF and B3 domain-containing transcription factor RAV1 (RAV1) of Arabidopsis thaliana (Mouse-ear cress).